The following is a 193-amino-acid chain: Small ribosomal subunit protein eS1 (193 aa).

It belongs to the eukaryotic ribosomal protein eS1 family.

The chain is Small ribosomal subunit protein eS1 from Sulfurisphaera tokodaii (strain DSM 16993 / JCM 10545 / NBRC 100140 / 7) (Sulfolobus tokodaii).